We begin with the raw amino-acid sequence, 714 residues long: Fatty acid oxidation complex subunit alpha (714 aa).

Positions 1–190 (MEMASAFTLN…KLGLVDDVVP (190 aa)) are enoyl-CoA hydratase. Residues 306–714 (APLNSVGILG…FWKTTATDLQ (409 aa)) are 3-hydroxyacyl-CoA dehydrogenase.

It in the N-terminal section; belongs to the enoyl-CoA hydratase/isomerase family. This sequence in the central section; belongs to the 3-hydroxyacyl-CoA dehydrogenase family. As to quaternary structure, heterotetramer of two alpha chains (FadJ) and two beta chains (FadI).

The protein resides in the cytoplasm. It catalyses the reaction a (3S)-3-hydroxyacyl-CoA = a (2E)-enoyl-CoA + H2O. It carries out the reaction a 4-saturated-(3S)-3-hydroxyacyl-CoA = a (3E)-enoyl-CoA + H2O. The enzyme catalyses a (3S)-3-hydroxyacyl-CoA + NAD(+) = a 3-oxoacyl-CoA + NADH + H(+). The catalysed reaction is (3S)-3-hydroxybutanoyl-CoA = (3R)-3-hydroxybutanoyl-CoA. The protein operates within lipid metabolism; fatty acid beta-oxidation. In terms of biological role, catalyzes the formation of a hydroxyacyl-CoA by addition of water on enoyl-CoA. Also exhibits 3-hydroxyacyl-CoA epimerase and 3-hydroxyacyl-CoA dehydrogenase activities. The protein is Fatty acid oxidation complex subunit alpha of Escherichia coli O127:H6 (strain E2348/69 / EPEC).